A 205-amino-acid chain; its full sequence is Holliday junction branch migration complex subunit RuvA (205 aa).

Positions 1–64 (MIGKLKGTID…EDQLRLFGFL (64 aa)) are domain I. Positions 65–143 (SALEREWFRL…AFAGEMSASI (79 aa)) are domain II. The tract at residues 144–153 (GLKQELGEGV) is flexible linker. Residues 153 to 205 (VAAAPVSDAVSALTNLGYSRDQAANAVAAALKNGGEGGDSAKLIRLGLKELAR) form a domain III region.

This sequence belongs to the RuvA family. In terms of assembly, homotetramer. Forms an RuvA(8)-RuvB(12)-Holliday junction (HJ) complex. HJ DNA is sandwiched between 2 RuvA tetramers; dsDNA enters through RuvA and exits via RuvB. An RuvB hexamer assembles on each DNA strand where it exits the tetramer. Each RuvB hexamer is contacted by two RuvA subunits (via domain III) on 2 adjacent RuvB subunits; this complex drives branch migration. In the full resolvosome a probable DNA-RuvA(4)-RuvB(12)-RuvC(2) complex forms which resolves the HJ.

It localises to the cytoplasm. The RuvA-RuvB-RuvC complex processes Holliday junction (HJ) DNA during genetic recombination and DNA repair, while the RuvA-RuvB complex plays an important role in the rescue of blocked DNA replication forks via replication fork reversal (RFR). RuvA specifically binds to HJ cruciform DNA, conferring on it an open structure. The RuvB hexamer acts as an ATP-dependent pump, pulling dsDNA into and through the RuvAB complex. HJ branch migration allows RuvC to scan DNA until it finds its consensus sequence, where it cleaves and resolves the cruciform DNA. This chain is Holliday junction branch migration complex subunit RuvA, found in Sinorhizobium fredii (strain NBRC 101917 / NGR234).